We begin with the raw amino-acid sequence, 294 residues long: Putative S-adenosyl-L-methionine-dependent methyltransferase RHA1_ro00605 (294 aa).

S-adenosyl-L-methionine contacts are provided by residues aspartate 120 and 149–150; that span reads DL.

It belongs to the UPF0677 family.

Exhibits S-adenosyl-L-methionine-dependent methyltransferase activity. This Rhodococcus jostii (strain RHA1) protein is Putative S-adenosyl-L-methionine-dependent methyltransferase RHA1_ro00605.